Consider the following 137-residue polypeptide: Type III secretion protein HrcQb (137 aa).

Over residues 1–22 the composition is skewed to acidic residues; sequence MSTEDLYQDDVESLEDYDDETA. Residues 1 to 67 are disordered; it reads MSTEDLYQDD…EQQAPSGLDS (67 aa). Residues 23-33 show a composition bias toward basic and acidic residues; it reads EQEHEHEHEQQ. Residues 36–58 are compositionally biased toward acidic residues; it reads EPDDESEYAEAEPDDDEQEEQEE.

It belongs to the FliN/MopA/SpaO family. In terms of assembly, homotetramer. The four monomers assemble into two tightly bound homodimers. Interacts with HrcQa.

Its subcellular location is the cytoplasm. In terms of biological role, component of the type III secretion system, which is required for effector protein delivery, parasitism, and pathogenicity. Probably participates in the formation of a C-ring-like assembly along with HrcQa. The polypeptide is Type III secretion protein HrcQb (hrcQb) (Pseudomonas syringae pv. tomato (strain ATCC BAA-871 / DC3000)).